The sequence spans 575 residues: DNA-directed RNA polymerase subunit beta' (575 aa).

It belongs to the RNA polymerase beta' chain family. In plastids the minimal PEP RNA polymerase catalytic core is composed of four subunits: alpha, beta, beta', and beta''. When a (nuclear-encoded) sigma factor is associated with the core the holoenzyme is formed, which can initiate transcription.

It localises to the plastid. It is found in the apicoplast. It catalyses the reaction RNA(n) + a ribonucleoside 5'-triphosphate = RNA(n+1) + diphosphate. Functionally, DNA-dependent RNA polymerase catalyzes the transcription of DNA into RNA using the four ribonucleoside triphosphates as substrates. In Plasmodium falciparum (isolate 3D7), this protein is DNA-directed RNA polymerase subunit beta' (rpoC1).